The chain runs to 562 residues: MPFSELLEQVGSTGRFQVLHVTLLCIPVLMMASHNLLQNFVATVPSHYCNAHANLSQARLSLEESLLITVPLDGAGKPQRCQRYAAPQWHLLGKNGTSGSGDLADATESMDAALQECSDGWSYNSTVRSSTIISEWHLVCDMHSFKQMGQTIYMGGVLVGALLFGGLSDRYGRRILLLISNLLMAVSGTCAAFSSSFSLFCVFRFGCGLALSGLGLNTFSLIVEWIPTRIRTAVGTTTGYCYTLGQLILVLLAYFIRDWRWLTLAVSLPFYVFFLIAWWFHESSRWLALSNRTEHALKNLKSVARFNGRHEEAEKLDIKMLHESMKKEMSCTQGSYSILDLFNTPAMRKRTLCLSAVWLSTSFAYYGLAMDLDKFGVDIYLIQVIFGAVDIPAKVVVVVSMSLIGRRRSQCAVLVVAGITILLNLLVPYDKQTIRTCLAVLGKGCLAASFNCCYLYSGELFPTIIRQNGMGWVSMMARIGAMVAPMVLLTRDYIPWLPGLIYGGAPILSGLAAIFLPETLGYPLPDTIQDVEESGSGRKSKMSTKETITLQDKQANLLKQSA.

Residues 1–15 (MPFSELLEQVGSTGR) lie on the Cytoplasmic side of the membrane. Residues 16–36 (FQVLHVTLLCIPVLMMASHNL) form a helical membrane-spanning segment. The Extracellular portion of the chain corresponds to 37 to 147 (LQNFVATVPS…LVCDMHSFKQ (111 aa)). The helical transmembrane segment at 148 to 168 (MGQTIYMGGVLVGALLFGGLS) threads the bilayer. Over 169–174 (DRYGRR) the chain is Cytoplasmic. A helical membrane pass occupies residues 175–195 (ILLLISNLLMAVSGTCAAFSS). Residues 196-205 (SFSLFCVFRF) are Extracellular-facing. Residues 206 to 226 (GCGLALSGLGLNTFSLIVEWI) traverse the membrane as a helical segment. Residues 227–235 (PTRIRTAVG) are Cytoplasmic-facing. A helical membrane pass occupies residues 236-256 (TTTGYCYTLGQLILVLLAYFI). The Extracellular portion of the chain corresponds to 257–260 (RDWR). The helical transmembrane segment at 261–281 (WLTLAVSLPFYVFFLIAWWFH) threads the bilayer. Topologically, residues 282–351 (ESSRWLALSN…FNTPAMRKRT (70 aa)) are cytoplasmic. The chain crosses the membrane as a helical span at residues 352–372 (LCLSAVWLSTSFAYYGLAMDL). Residues 373–378 (DKFGVD) are Extracellular-facing. The chain crosses the membrane as a helical span at residues 379 to 399 (IYLIQVIFGAVDIPAKVVVVV). Residues 400 to 408 (SMSLIGRRR) lie on the Cytoplasmic side of the membrane. The helical transmembrane segment at 409–429 (SQCAVLVVAGITILLNLLVPY) threads the bilayer. At 430–444 (DKQTIRTCLAVLGKG) the chain is on the extracellular side. A helical transmembrane segment spans residues 445 to 465 (CLAASFNCCYLYSGELFPTII). The Cytoplasmic portion of the chain corresponds to 466–468 (RQN). The helical transmembrane segment at 469–489 (GMGWVSMMARIGAMVAPMVLL) threads the bilayer. Over 490-495 (TRDYIP) the chain is Extracellular. Residues 496-516 (WLPGLIYGGAPILSGLAAIFL) traverse the membrane as a helical segment. Topologically, residues 517–562 (PETLGYPLPDTIQDVEESGSGRKSKMSTKETITLQDKQANLLKQSA) are cytoplasmic.

It belongs to the major facilitator (TC 2.A.1) superfamily. Organic cation transporter (TC 2.A.1.19) family. Glycosylated. Glycosylation is necessary for proper targeting of the transporter to the plasma membrane.

The protein localises to the cell membrane. Its subcellular location is the basolateral cell membrane. It localises to the basal cell membrane. Its function is as follows. Involved in the renal elimination of endogenous and exogenous organic anions. Functions as organic anion exchanger when the uptake of one molecule of organic anion is coupled with an efflux of one molecule of endogenous dicarboxylic acid (glutarate, ketoglutarate, etc). Mediates the sodium-independent uptake of p-aminohippurate (PAH), 2,3-dimercapto-1-propanesulfonic acid (DMPS), cidofovir, adefovir, 9-(2-phosphonylmethoxyethyl) guanine (PMEG), 9-(2-phosphonylmethoxyethyl) diaminopurine (PMEDAP), ochratoxin (OTA), acyclovir (ACV), 3'-azido-3-'deoxythymidine (AZT), cimetidine (CMD), 2,4-dichloro-phenoxyacetate (2,4-D), hippurate (HA), indoleacetate (IA), indoxyl sulfate (IS), 3-carboxy-4-methyl-5-propyl-2-furanpropionate (CMPF) and edaravone sulfate. Mediates the sodium-independent uptake of p-aminohippurate (PAH). PAH uptake is inhibited by p-chloromercuribenzenesulphonate (PCMBS), diethyl pyrocarbonate (DEPC), indomethacin, sulindac, diclofenac, carprofen, okadaic acid, benzothiazolylcysteine (BTC), S-chlorotrifluoroethylcysteine (CTFC), cysteine S-conjugates S-dichlorovinylcysteine (DCVC), furosemide, steviol, phorbol 12-myristate 13-acetate (PMA), calcium ionophore A23187, benzylpenicillin, bumetamide, losartan, probenecid, phenol red, urate, glutarate and alpha-ketoglutarate. PAH uptake is inhibited by glutarate. In Pseudopleuronectes americanus (Winter flounder), this protein is Solute carrier family 22 member 6 (SLC22A6).